The following is a 255-amino-acid chain: Homeobox protein Hox-D4 (255 aa).

Residues 31 to 128 (EQGADYYGGG…KQPPPGTALK (98 aa)) form a disordered region. Over residues 94–109 (EPCPAPPAPPPAPLPG) the composition is skewed to pro residues. The Antp-type hexapeptide motif lies at 133–138 (VYPWMK). A DNA-binding region (homeobox) is located at residues 154-213 (PKRSRTAYTRQQVLELEKEFHFNRYLTRRRRIEIAHTLCLSERQIKIWFQNRRMKWKKDH). Residues 212–255 (DHKLPNTKGRSSSSSSSSSCSSSVAPSQHLQPMAKDHHTDLTTL) are disordered. Positions 222–234 (SSSSSSSSSCSSS) are enriched in low complexity. Residues 245–255 (AKDHHTDLTTL) show a composition bias toward basic and acidic residues.

It belongs to the Antp homeobox family. Deformed subfamily. As to quaternary structure, forms a DNA-binding heterodimer with transcription factor PBX1.

The protein localises to the nucleus. Sequence-specific transcription factor which is part of a developmental regulatory system that provides cells with specific positional identities on the anterior-posterior axis. The protein is Homeobox protein Hox-D4 (HOXD4) of Gorilla gorilla gorilla (Western lowland gorilla).